The following is a 295-amino-acid chain: Pantothenate synthetase (295 aa).

29 to 36 (MGALHSGH) provides a ligand contact to ATP. H36 (proton donor) is an active-site residue. Q60 serves as a coordination point for (R)-pantoate. Q60 contributes to the beta-alanine binding site. 158–161 (GQKD) provides a ligand contact to ATP. Residue Q164 coordinates (R)-pantoate. ATP-binding positions include V187 and 195 to 198 (LSSR).

It belongs to the pantothenate synthetase family. As to quaternary structure, homodimer.

The protein localises to the cytoplasm. It carries out the reaction (R)-pantoate + beta-alanine + ATP = (R)-pantothenate + AMP + diphosphate + H(+). The protein operates within cofactor biosynthesis; (R)-pantothenate biosynthesis; (R)-pantothenate from (R)-pantoate and beta-alanine: step 1/1. Functionally, catalyzes the condensation of pantoate with beta-alanine in an ATP-dependent reaction via a pantoyl-adenylate intermediate. This chain is Pantothenate synthetase, found in Paenarthrobacter aurescens (strain TC1).